We begin with the raw amino-acid sequence, 249 residues long: U1 small nuclear ribonucleoprotein usp102 (249 aa).

The segment at 1-25 is disordered; sequence MDPQTNSHQEVQQPSPKETDSQTPS. An RRM 1 domain is found at 26-105; the sequence is ETLYIRNIEE…KPMMIQYSKS (80 aa). Positions 113 to 157 are disordered; the sequence is RESPEEIETRKKDRKNRREMLKRTSALQPAAPKPTHKKPVPKRNV. Residues 114–134 are compositionally biased toward basic and acidic residues; sequence ESPEEIETRKKDRKNRREMLK. Residues 174-247 form the RRM 2 domain; sequence KVLLLQNIPQ…NQIKVTFARK (74 aa).

Belongs to the RRM U1 A/B'' family. In terms of assembly, component of the spliceosome where it is associated with snRNP U1.

It localises to the nucleus. It is found in the nucleolus. Involved in nuclear mRNA splicing. The protein is U1 small nuclear ribonucleoprotein usp102 of Schizosaccharomyces pombe (strain 972 / ATCC 24843) (Fission yeast).